We begin with the raw amino-acid sequence, 284 residues long: Pheromone-regulated membrane protein 4 (284 aa).

Residues 20–38 form a helical membrane-spanning segment; it reads IISLTLVLLGVFSFLLLTW. A Glutaredoxin domain is found at 157–272; sequence RTDFLDIIRT…PLLKSEARGN (116 aa).

The protein resides in the membrane. In Saccharomyces cerevisiae (strain ATCC 204508 / S288c) (Baker's yeast), this protein is Pheromone-regulated membrane protein 4 (PRM4).